Consider the following 549-residue polypeptide: Probable amidase (549 aa).

Catalysis depends on charge relay system residues lysine 132 and serine 209. Serine 233 serves as the catalytic Acyl-ester intermediate.

Belongs to the amidase family.

The catalysed reaction is a monocarboxylic acid amide + H2O = a monocarboxylate + NH4(+). The protein is Probable amidase (AMD2) of Saccharomyces cerevisiae (strain ATCC 204508 / S288c) (Baker's yeast).